Reading from the N-terminus, the 173-residue chain is Photosystem I assembly protein Ycf3 (173 aa).

TPR repeat units follow at residues 35–68, 72–105, and 120–153; these read AFAYYRDGMSAQGDGEYAEALENYQEALRLEEDP, AFILYNMALVYASNGEHNRALEQYEQALALNAKM, and GSIAQEKGESDEADRRFDLAADFWSKAIRLAPNN.

Belongs to the Ycf3 family.

Its subcellular location is the cellular thylakoid membrane. In terms of biological role, essential for the assembly of the photosystem I (PSI) complex. May act as a chaperone-like factor to guide the assembly of the PSI subunits. This chain is Photosystem I assembly protein Ycf3, found in Synechococcus sp. (strain RCC307).